A 132-amino-acid polypeptide reads, in one-letter code: uncharacterized protein (132 aa).

Residues 1–69 (MNIGEAAKKS…LDEVGKLLTL (69 aa)) form the HTH merR-type domain. Residues 4-23 (GEAAKKSGLTPKMIRYYESI) constitute a DNA-binding region (H-T-H motif).

The protein resides in the cytoplasm. This is an uncharacterized protein from Pseudomonas aeruginosa (strain ATCC 15692 / DSM 22644 / CIP 104116 / JCM 14847 / LMG 12228 / 1C / PRS 101 / PAO1).